The primary structure comprises 250 residues: 5'-nucleotidase SurE (250 aa).

Residues aspartate 8, aspartate 9, serine 39, and asparagine 95 each coordinate a divalent metal cation.

Belongs to the SurE nucleotidase family. It depends on a divalent metal cation as a cofactor.

It localises to the cytoplasm. The catalysed reaction is a ribonucleoside 5'-phosphate + H2O = a ribonucleoside + phosphate. Nucleotidase that shows phosphatase activity on nucleoside 5'-monophosphates. The sequence is that of 5'-nucleotidase SurE from Cupriavidus necator (strain ATCC 17699 / DSM 428 / KCTC 22496 / NCIMB 10442 / H16 / Stanier 337) (Ralstonia eutropha).